The following is a 405-amino-acid chain: Probable tRNA sulfurtransferase (405 aa).

The region spanning 60-165 (ETIDQRLKLV…QDAIYISNQL (106 aa)) is the THUMP domain. ATP is bound by residues 183–184 (ML), 208–209 (HF), R265, G287, and Q296.

Belongs to the ThiI family.

It is found in the cytoplasm. It catalyses the reaction [ThiI sulfur-carrier protein]-S-sulfanyl-L-cysteine + a uridine in tRNA + 2 reduced [2Fe-2S]-[ferredoxin] + ATP + H(+) = [ThiI sulfur-carrier protein]-L-cysteine + a 4-thiouridine in tRNA + 2 oxidized [2Fe-2S]-[ferredoxin] + AMP + diphosphate. The enzyme catalyses [ThiS sulfur-carrier protein]-C-terminal Gly-Gly-AMP + S-sulfanyl-L-cysteinyl-[cysteine desulfurase] + AH2 = [ThiS sulfur-carrier protein]-C-terminal-Gly-aminoethanethioate + L-cysteinyl-[cysteine desulfurase] + A + AMP + 2 H(+). It participates in cofactor biosynthesis; thiamine diphosphate biosynthesis. Its function is as follows. Catalyzes the ATP-dependent transfer of a sulfur to tRNA to produce 4-thiouridine in position 8 of tRNAs, which functions as a near-UV photosensor. Also catalyzes the transfer of sulfur to the sulfur carrier protein ThiS, forming ThiS-thiocarboxylate. This is a step in the synthesis of thiazole, in the thiamine biosynthesis pathway. The sulfur is donated as persulfide by IscS. In Lactobacillus johnsonii (strain CNCM I-12250 / La1 / NCC 533), this protein is Probable tRNA sulfurtransferase.